We begin with the raw amino-acid sequence, 878 residues long: Phosphoenolpyruvate carboxylase (878 aa).

Catalysis depends on residues histidine 138 and lysine 545.

This sequence belongs to the PEPCase type 1 family. Requires Mg(2+) as cofactor.

The enzyme catalyses oxaloacetate + phosphate = phosphoenolpyruvate + hydrogencarbonate. Its function is as follows. Forms oxaloacetate, a four-carbon dicarboxylic acid source for the tricarboxylic acid cycle. The protein is Phosphoenolpyruvate carboxylase of Shewanella loihica (strain ATCC BAA-1088 / PV-4).